The following is a 222-amino-acid chain: UPF0316 protein Mboo_0791 (222 aa).

A run of 3 helical transmembrane segments spans residues Phe25–Ala45, Leu67–Leu87, and Ile93–Ile113.

It belongs to the UPF0316 family.

It is found in the cell membrane. This Methanoregula boonei (strain DSM 21154 / JCM 14090 / 6A8) protein is UPF0316 protein Mboo_0791.